Consider the following 572-residue polypeptide: MEYWKHTNHRKDAGNELETSMATHGNKLTNKITYILWTIILVLLSIVLIIVLINSIKSEKAHESLLQDINNEFMEITEKIQMASDNTNDLIQSGVNTRLLTIQSHVQNYIPISLTQQMSDLRKFISEIIIRNDNQEVPPQRITHDVGIKPLNPDDFWRCTSGLPSLMKTPKIRLMPGPGLLTMPTTVDGCVRTPSLVINDLIYAYTSNLITRGCQDIGKSYQVLQIGIITVNSDLVPDLNPRISHTFNINDNRKSCSLALLNTDVYQLCSTPKVDERSDYASSGIEDIVLDIVNYDGSISTTRFKNNNISFDQPYAALYPSVGPGIYYKGKIIFLGYGGLEHPINENVICNTTGCPGKTQRDCNQASHSPWFSDRRMVNSIIVVDKGLNSIPKLKVWTISMRQNYWGSEGRLLLLGNKIYIYTRSTSWHSKLQLGIIDITDYSDIRIKWTWHNVLSRPGNNECPWGHSCPDGCITGVYTDAYPLNPTGSIVSSVILDSQKSRVNPVITYSTATERVNELAIRNKTLSAGYTTTSCITHYNKGYCFHIVEINHKSLDTFQPMLFKTEVPKSCS.

At 1–31 (MEYWKHTNHRKDAGNELETSMATHGNKLTNK) the chain is on the intravirion side. A helical transmembrane segment spans residues 32–52 (ITYILWTIILVLLSIVLIIVL). The Virion surface portion of the chain corresponds to 53 to 572 (INSIKSEKAH…FKTEVPKSCS (520 aa)). Intrachain disulfides connect Cys190/Cys214 and Cys256/Cys269. Residues 252–257 (NRKSCS) form an involved in neuraminidase activity region. N-linked (GlcNAc...) asparagine; by host glycans are attached at residues Asn308 and Asn351. 2 cysteine pairs are disulfide-bonded: Cys355/Cys469 and Cys463/Cys473. An N-linked (GlcNAc...) asparagine; by host glycan is attached at Asn523. Residues Cys535 and Cys544 are joined by a disulfide bond.

This sequence belongs to the paramyxoviruses hemagglutinin-neuraminidase family. Homotetramer; composed of disulfide-linked homodimers. Interacts with F protein trimer.

It is found in the virion membrane. It localises to the host cell membrane. It catalyses the reaction Hydrolysis of alpha-(2-&gt;3)-, alpha-(2-&gt;6)-, alpha-(2-&gt;8)- glycosidic linkages of terminal sialic acid residues in oligosaccharides, glycoproteins, glycolipids, colominic acid and synthetic substrates.. Its function is as follows. Attaches the virus to sialic acid-containing cell receptors and thereby initiating infection. Binding of HN protein to the receptor induces a conformational change that allows the F protein to trigger virion/cell membranes fusion. Functionally, neuraminidase activity ensures the efficient spread of the virus by dissociating the mature virions from the neuraminic acid containing glycoproteins. The protein is Hemagglutinin-neuraminidase (HN) of Human parainfluenza 3 virus (strain Tex/9305/82) (HPIV-3).